We begin with the raw amino-acid sequence, 309 residues long: Caspase-7 (309 aa).

Positions 1–24 are cleaved as a propeptide — N-terminally processed; the sequence is MSGDQHADRSSGEKSNGDQDDTVD. Basic and acidic residues predominate over residues 1–31; it reads MSGDQHADRSSGEKSNGDQDDTVDAKPDRSS. Residues 1–53 are disordered; the sequence is MSGDQHADRSSGEKSNGDQDDTVDAKPDRSSRLSLFAKKKKNGEEEQPKSSLS. The tract at residues 39-42 is exosite; sequence KKKN. Residues 81 to 92 are loop L1; that stretch reads KNFEDKTGMGTR. Active-site residues include H149 and C191. The segment at 192–201 is loop L2; it reads RGSEFDEGIQ. The propeptide occupies 204-214; the sequence is SGPANDTLETD. Residues 234 to 246 are loop L3; sequence VPGYYSWRNPGRG. The segment at 282-296 is loop L4; the sequence is ESQSDDPRFSEKKQI.

Belongs to the peptidase C14A family. Heterotetramer that consists of two anti-parallel arranged heterodimers, each one formed by a 20 kDa (p20) and a 11 kDa (p11) subunit. In terms of processing, cleavage by different proteases, such as granzyme B (GZMB), caspase-1 (CASP1), caspase-8 (CASP8) or caspase-9 (CASP9) generate the two active subunits. Its involvement in different programmed cell death processes is probably specified by the protease that activates CASP7. Cleaved and activated by initiator caspases (CASP8 and/or CASP9), leading to execution phase of apoptosis. Cleavage and maturation by GZMB regulates granzyme-mediated programmed cell death. Cleaved and activated by CASP1 in response to bacterial infection.

Its subcellular location is the cytoplasm. The protein localises to the cytosol. The protein resides in the nucleus. It localises to the secreted. It is found in the extracellular space. It carries out the reaction Strict requirement for an Asp residue at position P1 and has a preferred cleavage sequence of Asp-Glu-Val-Asp-|-.. With respect to regulation, during activation, the N-terminal disordered prodomain is removed by cleavage. Concomitantly, double cleavage gives rise to a large Caspase-7 subunit p20 and a small Caspase-7 subunit p11. The two large and two small subunits then assemble to form the active CASP7 complex. Can be cleaved and activated by different caspases, depending on the context. Cleaved and activated by initiator caspases (CASP8 and/or CASP9), leading to execution phase of apoptosis. Cleavage and maturation by GZMB regulates granzyme-mediated programmed cell death. Cleavage and maturation by CASP1 regulates pyroptosis. Inhibited by BIRC6; following inhibition of BIRC6-caspase binding by DIABLO/SMAC, BIRC6 is subjected to caspase cleavage, leading to an increase in active caspases. Its function is as follows. Thiol protease involved in different programmed cell death processes, such as apoptosis, pyroptosis or granzyme-mediated programmed cell death, by proteolytically cleaving target proteins. Has a marked preference for Asp-Glu-Val-Asp (DEVD) consensus sequences, with some plasticity for alternate non-canonical sequences. Its involvement in the different programmed cell death processes is probably determined by upstream proteases that activate CASP7. Acts as an effector caspase involved in the execution phase of apoptosis: following cleavage and activation by initiator caspases (CASP8 and/or CASP9), mediates execution of apoptosis by catalyzing cleavage of proteins. Compared to CASP3, acts as a minor executioner caspase and cleaves a limited set of target proteins. Acts as a key regulator of the inflammatory response in response to bacterial infection by catalyzing cleavage and activation of the sphingomyelin phosphodiesterase SMPD1 in the extracellular milieu, thereby promoting membrane repair. Cleaves BIRC6 following inhibition of BIRC6-caspase binding by DIABLO/SMAC. In Gallus gallus (Chicken), this protein is Caspase-7.